The chain runs to 835 residues: Protein translocase subunit SecA (835 aa).

ATP is bound by residues Gln-85, 103–107, and Asp-492; that span reads GEGKT. Zn(2+)-binding residues include Cys-819, Cys-821, Cys-830, and Cys-831.

The protein belongs to the SecA family. As to quaternary structure, monomer and homodimer. Part of the essential Sec protein translocation apparatus which comprises SecA, SecYEG and auxiliary proteins SecDF. Other proteins may also be involved. It depends on Zn(2+) as a cofactor.

Its subcellular location is the cell membrane. The protein resides in the cytoplasm. It carries out the reaction ATP + H2O + cellular proteinSide 1 = ADP + phosphate + cellular proteinSide 2.. In terms of biological role, part of the Sec protein translocase complex. Interacts with the SecYEG preprotein conducting channel. Has a central role in coupling the hydrolysis of ATP to the transfer of proteins into and across the cell membrane, serving as an ATP-driven molecular motor driving the stepwise translocation of polypeptide chains across the membrane. In Clostridium botulinum (strain Okra / Type B1), this protein is Protein translocase subunit SecA.